Here is a 376-residue protein sequence, read N- to C-terminus: PCM7-4 (376 aa).

Has antibacterial activity against Listeria monocytogenes. The polypeptide is PCM7-4 (Bacillus velezensis).